Reading from the N-terminus, the 334-residue chain is MSDAPSSSPDATASHWCYHCNKRVVVETLDDFVVCCECNKGFVESIQPTPAAYSSPAPPQPLSPDLNVEDSSIGSHFLQMLRLLAHAPSQRSPPRHLDVLSYEDDFFRLELNSRNEIDDDEDEDEDDGDEEEEDEEENLTVNDEEDEEDDLRRRNRFPLTTTQSRTGRNRILDWAEILMGIEDNSIEFRMESDRYAGNPADYIDDAAGYEALLQNLAEGDGGGGGGRRGAPPAAKSAIEALETFEVSSSEGEMVMVCAVCKDGMVMGETGKKLPCGHCYHGDCIVPWLGTRNSCPVCRFQLETDDAEYEEERKKRTSTVSDSAAASSSSSTSRY.

The segment at 111–158 is disordered; that stretch reads LNSRNEIDDDEDEDEDDGDEEEEDEEENLTVNDEEDEEDDLRRRNRFP. Acidic residues predominate over residues 117–149; it reads IDDDEDEDEDDGDEEEEDEEENLTVNDEEDEED. The RING-type; atypical zinc-finger motif lies at 257–298; it reads CAVCKDGMVMGETGKKLPCGHCYHGDCIVPWLGTRNSCPVCR. Residues 307–334 form a disordered region; that stretch reads EYEEERKKRTSTVSDSAAASSSSSTSRY. Residues 317–334 show a composition bias toward low complexity; the sequence is STVSDSAAASSSSSTSRY.

As to quaternary structure, interacts with the RING finger of COP1. Interacts with UBC8 through its N-terminal region. In terms of tissue distribution, expressed in both light- and dark-grown seedlings.

Its subcellular location is the cytoplasm. It carries out the reaction S-ubiquitinyl-[E2 ubiquitin-conjugating enzyme]-L-cysteine + [acceptor protein]-L-lysine = [E2 ubiquitin-conjugating enzyme]-L-cysteine + N(6)-ubiquitinyl-[acceptor protein]-L-lysine.. The protein operates within protein modification; protein ubiquitination. In terms of biological role, E3 ubiquitin-protein ligase that mediates ubiquitination and subsequent proteasomal degradation of target proteins. Probably forms a minimal ubiquitin ligase complex in cooperation with the E2 enzyme UBC8. Its interaction with COP1 suggests that it may participate in proteasome-mediated degradation of HY5 in vivo. In Arabidopsis thaliana (Mouse-ear cress), this protein is E3 ubiquitin-protein ligase CIP8 (CIP8).